The primary structure comprises 625 residues: E3 ubiquitin-protein ligase synoviolin (625 aa).

Residues 1 to 4 (MVRA) are Cytoplasmic-facing. The chain crosses the membrane as a helical span at residues 5-25 (ALVTATSLALTGAVVAHAYFL). The Lumenal portion of the chain corresponds to 26-40 (KHQFYPTVVYLTKSS). The helical transmembrane segment at 41-61 (PSMAVLYIQAFVLVFLLGKLM) threads the bilayer. Over 62–98 (RKVFFGQLRAAEMEHLIERSWYAVTETCLAFTVFRDD) the chain is Cytoplasmic. The helical transmembrane segment at 99 to 119 (FSPRFVALFTLLLFLKCFHWL) threads the bilayer. Over 120-135 (AEDRVDFMERSPNISW) the chain is Lumenal. The helical transmembrane segment at 136-156 (VFHFRVLSLMVLLGVMDFLFV) threads the bilayer. The Cytoplasmic portion of the chain corresponds to 157 to 169 (NHACHSIITRGAS). A helical membrane pass occupies residues 170–190 (VQLVFGFEYAILMTMVLTTFI). The Lumenal segment spans residues 191–212 (KYTLHTIDLQSENPWDNKAVYM). The helical transmembrane segment at 213–235 (LYTELFTGFIKVLLYMAFMTIMI) threads the bilayer. Residues 236-270 (KVHTFPLFAIRPMYLAMRQFKKAVTDAIMSRRAIR) form an interaction with p53/TP53 region. Over 236-625 (KVHTFPLFAI…GNLLKLASVN (390 aa)) the chain is Cytoplasmic. Positions 291, 294, 307, 309, 312, 315, 326, and 329 each coordinate Zn(2+). Residues 291–330 (CIICREEMVTGAKKLPCNHIFHSSCLRSWFQRQQTCPTCR) form an RING-type; atypical zinc finger. Disordered stretches follow at residues 337-361 (SQPN…NAPI), 390-434 (PPPA…SAAP), 462-487 (FMSS…LEQE), and 523-625 (LSPP…ASVN). Residues 342-361 (TPAPPAAQAPAPPAPANAPI) are compositionally biased toward pro residues. A compositionally biased stretch (low complexity) spans 423–434 (AQSTAEAASAAP). Residues 462–471 (FMSSMPPPPS) are compositionally biased toward pro residues. The span at 523-564 (LSPPRSETNTGETSESANVESSPSTANTETAGQEIQSQSGES) shows a compositional bias: polar residues.

This sequence belongs to the HRD1 family. In terms of assembly, homodimer.

It is found in the endoplasmic reticulum membrane. It catalyses the reaction S-ubiquitinyl-[E2 ubiquitin-conjugating enzyme]-L-cysteine + [acceptor protein]-L-lysine = [E2 ubiquitin-conjugating enzyme]-L-cysteine + N(6)-ubiquitinyl-[acceptor protein]-L-lysine.. Its pathway is protein modification; protein ubiquitination. In terms of biological role, E3 ubiquitin-protein ligase which accepts ubiquitin specifically from endoplasmic reticulum-associated UBC7 E2 ligase and transfers it to substrates, promoting their degradation. Component of the endoplasmic reticulum quality control (ERQC) system also called ER-associated degradation (ERAD) involved in ubiquitin-dependent degradation of misfolded endoplasmic reticulum proteins. Also promotes the degradation of normal but naturally short-lived proteins. Protects cells from ER stress-induced apoptosis. Sequesters p53 in the cytoplasm and promotes its degradation, thereby negatively regulating its biological function in transcription, cell cycle regulation and apoptosis. The protein is E3 ubiquitin-protein ligase synoviolin (syvn1) of Danio rerio (Zebrafish).